We begin with the raw amino-acid sequence, 870 residues long: H(+)/Cl(-) exchange transporter 6 (870 aa).

Topologically, residues 1–80 (MAGCRGSVCC…KKGRRYEAVK (80 aa)) are cytoplasmic. 2 helical membrane passes run 81-113 (WMVV…FGVV) and 128-150 (LSLL…LVLI). A Selectivity filter part_1 motif is present at residues 156–160 (GSGIP). Position 157 (serine 157) interacts with chloride. The helical intramembrane region spans 159-166 (IPEIKCYL). Transmembrane regions (helical) follow at residues 176 to 194 (RLRT…VSGG) and 200 to 217 (EGPM…LPQF). Residues 198–202 (GKEGP) carry the Selectivity filter part_2 motif. 2 consecutive intramembrane regions (helical) follow at residues 241–253 (FVSA…VAAA) and 257–265 (PIGGTLFSL). 3 helical membrane passes run 277-294 (TWKV…LNFF), 335-364 (GFFV…YRMR), and 371-392 (KLVR…VFVA). Residues asparagine 410, asparagine 423, and asparagine 433 are each glycosylated (N-linked (GlcNAc...) asparagine). Transmembrane regions (helical) follow at residues 463–482 (PVTL…WTFG) and 488–512 (GLFV…KSYI). The Selectivity filter part_3 motif lies at 488 to 492 (GLFVP). A chloride-binding site is contributed by phenylalanine 490. Residues 520–534 (GTFALIGAAAFLGGV) constitute an intramembrane region (helical). Positions 535–537 (VRM) form an intramembrane region, note=Loop between two helices. The helical intramembrane region spans 538–549 (TISLTVILIEST). Positions 550–553 (NEIT) form an intramembrane region, note=Loop between two helices. The chain crosses the membrane as a helical span at residues 554-572 (YGLPIMVTLMVAKWTGDLF). Residues 573 to 870 (NKGIYDVHIG…ARLRQHYQTL (298 aa)) are Cytoplasmic-facing. Tyrosine 577 lines the chloride pocket. The region spanning 606-663 (MEPNLTYVYPHTRIQSLVSILRTTVHHAFPVVTENRGNEKEFMKGNQLISNNIKFKKS) is the CBS 1 domain. Residue 631–633 (HHA) participates in ATP binding. Serine 774 carries the phosphoserine modification. The CBS 2 domain occupies 808-869 (MNPSPFTVSP…QARLRQHYQT (62 aa)). An ATP-binding site is contributed by 850–853 (TRHN).

This sequence belongs to the chloride channel (TC 2.A.49) family. ClC-6/CLCN6 subfamily. Post-translationally, N-glycosylated on several asparagine residues. As to expression, detected in whole brain and in hippocampus neurons (at protein level). Detected in brain, trigeminus, dorsal root ganglion, spinal cord, eye, kidney, testis, skeletal muscle, thymus and pancreas. Isoform ClC-6c is expressed only in kidney.

The protein localises to the late endosome membrane. It carries out the reaction 2 chloride(in) + H(+)(out) = 2 chloride(out) + H(+)(in). Functionally, voltage-gated channel mediating the exchange of chloride ions against protons. Functions as antiporter and contributes to the acidification of the late endosome lumen. The CLC channel family contains both chloride channels and proton-coupled anion transporters that exchange chloride or another anion for protons. The presence of conserved gating glutamate residues is typical for family members that function as antiporters. The protein is H(+)/Cl(-) exchange transporter 6 of Mus musculus (Mouse).